A 277-amino-acid chain; its full sequence is Secoisolariciresinol dehydrogenase (277 aa).

NAD(+) contacts are provided by residues 24-29 (GGASGI), Asp48, Val73, and Asn99. Ser163 provides a ligand contact to substrate. The Proton donor/acceptor role is filled by Tyr166. Lys170 provides a ligand contact to NAD(+).

This sequence belongs to the short-chain dehydrogenases/reductases (SDR) family. As to quaternary structure, homotetramer.

It carries out the reaction (-)-secoisolariciresinol + 2 NAD(+) = (-)-matairesinol + 2 NADH + 2 H(+). Oxidoreductase involved in lignan biosynthesis. Catalyzes the stereospecific conversion of (-)-secoisolariciresinol to (-)-matairesinol via a lactol intermediate. The protein is Secoisolariciresinol dehydrogenase of Forsythia intermedia (Border forsythia).